A 355-amino-acid polypeptide reads, in one-letter code: Homeotic protein knotted-1 (355 aa).

Residues 205-233 are disordered; sequence KCEGVGSSEEDQDNSGGETELPEIDPRAE. Residues 236–256 form the ELK domain; the sequence is ELKNHLLRKYSGYLSSLKQEL. Positions 257–320 form a DNA-binding region, homeobox; TALE-type; it reads SKKKKKGKLP…NQRKRHWKPS (64 aa).

It belongs to the TALE/KNOX homeobox family. As to expression, expressed in the apical meristems, in the newly emerged lateral primordia in the floral bud, in their vascular bundles and in the cortex parenchyma of the floral pedicle. Also present in the lateral tips of leaf primordia.

The protein localises to the nucleus. Appears to be involved in meristem formation and in the regulation of leaf morphology. Misexpression makes the leaf more compound which is always associated with growth retardation and loss of apical dominance, resulting in dwarfed, bushy plants. Probably binds to the DNA sequence 5'-TGAC-3'. The protein is Homeotic protein knotted-1 (KN1) of Solanum lycopersicum (Tomato).